Consider the following 559-residue polypeptide: Forkhead box protein O6 (559 aa).

Disordered stretches follow at residues 1-77 (MAAK…VGPL) and 163-183 (SWWM…RRAV). Residues 88–182 (WGNLSYADLI…KTGKTPRRRA (95 aa)) constitute a DNA-binding region (fork-head). At Ser184 the chain carries Phosphoserine. Disordered stretches follow at residues 197-232 (KASK…KWAA) and 534-559 (NFDS…WVPG). Composition is skewed to pro residues over residues 213–222 (DSPPGAPVPG) and 539–553 (LPPP…PPPN).

In terms of processing, phosphorylation of Ser-184 is be important in regulating the transacriptional activity. Expressed in brain in areas of the nucleus accumbens, cingulate cortex, parts of the amygdala and in the hippocampus.

It is found in the cytoplasm. The protein resides in the nucleus. Its function is as follows. Transcriptional activator. In Mus musculus (Mouse), this protein is Forkhead box protein O6 (Foxo6).